The primary structure comprises 743 residues: 1,4-alpha-glucan branching enzyme GlgB (743 aa).

Asp416 (nucleophile) is an active-site residue. The active-site Proton donor is Glu469.

Belongs to the glycosyl hydrolase 13 family. GlgB subfamily. As to quaternary structure, monomer.

It catalyses the reaction Transfers a segment of a (1-&gt;4)-alpha-D-glucan chain to a primary hydroxy group in a similar glucan chain.. Its pathway is glycan biosynthesis; glycogen biosynthesis. In terms of biological role, catalyzes the formation of the alpha-1,6-glucosidic linkages in glycogen by scission of a 1,4-alpha-linked oligosaccharide from growing alpha-1,4-glucan chains and the subsequent attachment of the oligosaccharide to the alpha-1,6 position. The chain is 1,4-alpha-glucan branching enzyme GlgB from Shewanella baltica (strain OS155 / ATCC BAA-1091).